A 183-amino-acid chain; its full sequence is Threonylcarbamoyl-AMP synthase (183 aa).

The region spanning 1–183 (MNREQIADAL…LRTNQLFRQG (183 aa)) is the YrdC-like domain.

This sequence belongs to the SUA5 family. TsaC subfamily.

Its subcellular location is the cytoplasm. The catalysed reaction is L-threonine + hydrogencarbonate + ATP = L-threonylcarbamoyladenylate + diphosphate + H2O. Functionally, required for the formation of a threonylcarbamoyl group on adenosine at position 37 (t(6)A37) in tRNAs that read codons beginning with adenine. Catalyzes the conversion of L-threonine, HCO(3)(-)/CO(2) and ATP to give threonylcarbamoyl-AMP (TC-AMP) as the acyladenylate intermediate, with the release of diphosphate. The polypeptide is Threonylcarbamoyl-AMP synthase (Haemophilus influenzae (strain ATCC 51907 / DSM 11121 / KW20 / Rd)).